Here is a 474-residue protein sequence, read N- to C-terminus: Aspartyl/glutamyl-tRNA(Asn/Gln) amidotransferase subunit B (474 aa).

The protein belongs to the GatB/GatE family. GatB subfamily. In terms of assembly, heterotrimer of A, B and C subunits.

The enzyme catalyses L-glutamyl-tRNA(Gln) + L-glutamine + ATP + H2O = L-glutaminyl-tRNA(Gln) + L-glutamate + ADP + phosphate + H(+). The catalysed reaction is L-aspartyl-tRNA(Asn) + L-glutamine + ATP + H2O = L-asparaginyl-tRNA(Asn) + L-glutamate + ADP + phosphate + 2 H(+). In terms of biological role, allows the formation of correctly charged Asn-tRNA(Asn) or Gln-tRNA(Gln) through the transamidation of misacylated Asp-tRNA(Asn) or Glu-tRNA(Gln) in organisms which lack either or both of asparaginyl-tRNA or glutaminyl-tRNA synthetases. The reaction takes place in the presence of glutamine and ATP through an activated phospho-Asp-tRNA(Asn) or phospho-Glu-tRNA(Gln). This is Aspartyl/glutamyl-tRNA(Asn/Gln) amidotransferase subunit B from Campylobacter curvus (strain 525.92).